Consider the following 142-residue polypeptide: Inner membrane protein YqaA (142 aa).

The Cytoplasmic segment spans residues Met1–Ser2. The chain crosses the membrane as a helical span at residues Glu3–Gly23. The Periplasmic segment spans residues Asn24–Glu26. A helical membrane pass occupies residues Val27–Ala47. Residues Thr48 to Ala86 lie on the Cytoplasmic side of the membrane. Residues Val87–Trp107 form a helical membrane-spanning segment. Residues Met108–His142 are Periplasmic-facing.

The protein to H.influenzae HI_0489.

The protein resides in the cell inner membrane. The sequence is that of Inner membrane protein YqaA (yqaA) from Escherichia coli (strain K12).